Here is a 264-residue protein sequence, read N- to C-terminus: Thymidylate synthase (264 aa).

Arg21 contacts dUMP. His51 provides a ligand contact to (6R)-5,10-methylene-5,6,7,8-tetrahydrofolate. 126–127 (RR) contributes to the dUMP binding site. Cys146 functions as the Nucleophile in the catalytic mechanism. DUMP is bound by residues 166–169 (RSAD), Asn177, and 207–209 (HLY). Residue Asp169 participates in (6R)-5,10-methylene-5,6,7,8-tetrahydrofolate binding. Ala263 serves as a coordination point for (6R)-5,10-methylene-5,6,7,8-tetrahydrofolate.

This sequence belongs to the thymidylate synthase family. Bacterial-type ThyA subfamily. In terms of assembly, homodimer.

It localises to the cytoplasm. The catalysed reaction is dUMP + (6R)-5,10-methylene-5,6,7,8-tetrahydrofolate = 7,8-dihydrofolate + dTMP. It participates in pyrimidine metabolism; dTTP biosynthesis. Catalyzes the reductive methylation of 2'-deoxyuridine-5'-monophosphate (dUMP) to 2'-deoxythymidine-5'-monophosphate (dTMP) while utilizing 5,10-methylenetetrahydrofolate (mTHF) as the methyl donor and reductant in the reaction, yielding dihydrofolate (DHF) as a by-product. This enzymatic reaction provides an intracellular de novo source of dTMP, an essential precursor for DNA biosynthesis. The sequence is that of Thymidylate synthase from Stutzerimonas stutzeri (strain A1501) (Pseudomonas stutzeri).